The following is a 293-amino-acid chain: Decaprenyl diphosphate synthase (293 aa).

Positions 1–24 (MATTRGKKTYPQLPPAPDDYPTFP) are disordered. Asp73 is a catalytic residue. Asp73 provides a ligand contact to Mg(2+). Substrate is bound by residues 74 to 77 (GNGR), Trp78, Arg86, His90, and 118 to 120 (STE). Asn121 (proton acceptor) is an active-site residue. Substrate-binding positions include Trp122, Arg124, Arg241, and 247-249 (RAS). Position 260 (Glu260) interacts with Mg(2+).

The protein belongs to the UPP synthase family. In terms of assembly, homodimer. Requires Mg(2+) as cofactor.

The protein localises to the cell membrane. It catalyses the reaction (2Z,6E)-farnesyl diphosphate + 7 isopentenyl diphosphate = (2Z,6Z,10Z,14Z,18Z,22Z,26Z,30Z,34E)-decaprenyl diphosphate + 7 diphosphate. It carries out the reaction n isopentenyl diphosphate + (2E,6E)-farnesyl diphosphate = a di-trans,poly-cis-polyprenyl diphosphate + n diphosphate. In terms of biological role, catalyzes the sequential condensation of isopentenyl diphosphate (IPP) in the cis configuration with (2Z,6E)-farnesyl diphosphate (Z-FPP or EZ-FPP) generating the 50 carbon product trans,polycis-decaprenyl diphosphate. When (2E,6E)-farnesyl diphosphate (E-FPP or EE-FPP) is used in vitro, both primary products decaprenyl diphosphate and heptaprenyl diphosphate are synthesized. It is probably due to the fact that M.smegmatis synthesizes both (2E,6E,10E)-geranylgeranyl diphosphate (EEE-GGPP) and (2E,6E,10Z)-geranylgeranyl diphosphate (EEZ-GGPP). Can also accept many different allylic substrates, including E-geranyl diphosphate (E-GPP), neryl diphosphate (NPP), and all-trans-geranyl-geranyl diphosphate. The polypeptide is Decaprenyl diphosphate synthase (uppS) (Mycolicibacterium smegmatis (strain ATCC 700084 / mc(2)155) (Mycobacterium smegmatis)).